Reading from the N-terminus, the 468-residue chain is Factor XIIa inhibitor (468 aa).

Residues 1–23 (MASRLTPLTLLLLLLLAGDRVTS) form the signal peptide. The segment at 27–60 (VGPGNLQEGESEGDSQKGGILDGESIQGNEDSPT) is disordered. Residues Asn65, Asn176, Asn227, and Asn326 are each glycosylated (N-linked (GlcNAc...) asparagine). 2 disulfides stabilise this stretch: Cys97–Cys396 and Cys104–Cys179.

Belongs to the serpin family. In terms of processing, N- and O-glycosylated.

The protein localises to the secreted. In terms of biological role, may play a potentially crucial role in regulating important physiological pathways including complement activation, blood coagulation, fibrinolysis and the generation of kinins. The chain is Factor XIIa inhibitor from Bos taurus (Bovine).